The primary structure comprises 463 residues: L-seryl-tRNA(Sec) selenium transferase (463 aa).

Lys-295 bears the N6-(pyridoxal phosphate)lysine mark.

The protein belongs to the SelA family. Homodecamer; pentamer of dimers. Binds only one seryl-tRNA(Sec) per dimer. Pyridoxal 5'-phosphate serves as cofactor.

The protein localises to the cytoplasm. The catalysed reaction is L-seryl-tRNA(Sec) + selenophosphate + H(+) = L-selenocysteinyl-tRNA(Sec) + phosphate. It participates in aminoacyl-tRNA biosynthesis; selenocysteinyl-tRNA(Sec) biosynthesis; selenocysteinyl-tRNA(Sec) from L-seryl-tRNA(Sec) (bacterial route): step 1/1. Its function is as follows. Converts seryl-tRNA(Sec) to selenocysteinyl-tRNA(Sec) required for selenoprotein biosynthesis. This is L-seryl-tRNA(Sec) selenium transferase from Edwardsiella ictaluri (strain 93-146).